Reading from the N-terminus, the 92-residue chain is N(2)-fixation sustaining protein CowN (92 aa).

It belongs to the CowN family.

Its function is as follows. Is required to sustain N(2)-dependent growth in the presence of low levels of carbon monoxide (CO). Probably acts by protecting the N(2) fixation ability of the nitrogenase complex, which is inactivated in the presence of CO. The sequence is that of N(2)-fixation sustaining protein CowN from Cereibacter sphaeroides (strain ATCC 17025 / ATH 2.4.3) (Rhodobacter sphaeroides).